Reading from the N-terminus, the 614-residue chain is Jacalin-related lectin 14 (614 aa).

Jacalin-type lectin domains are found at residues 27-169 (VQKM…YFSW), 172-314 (PRKM…YFTT), 317-462 (PTKS…YFSP), and 468-611 (AEKL…HVVP).

The protein belongs to the jacalin lectin family.

The sequence is that of Jacalin-related lectin 14 (JAL14) from Arabidopsis thaliana (Mouse-ear cress).